Here is a 556-residue protein sequence, read N- to C-terminus: 2-succinyl-5-enolpyruvyl-6-hydroxy-3-cyclohexene-1-carboxylate synthase (556 aa).

Belongs to the TPP enzyme family. MenD subfamily. In terms of assembly, homodimer. Mg(2+) is required as a cofactor. The cofactor is Mn(2+). It depends on thiamine diphosphate as a cofactor.

It carries out the reaction isochorismate + 2-oxoglutarate + H(+) = 5-enolpyruvoyl-6-hydroxy-2-succinyl-cyclohex-3-ene-1-carboxylate + CO2. Its pathway is quinol/quinone metabolism; 1,4-dihydroxy-2-naphthoate biosynthesis; 1,4-dihydroxy-2-naphthoate from chorismate: step 2/7. The protein operates within quinol/quinone metabolism; menaquinone biosynthesis. In terms of biological role, catalyzes the thiamine diphosphate-dependent decarboxylation of 2-oxoglutarate and the subsequent addition of the resulting succinic semialdehyde-thiamine pyrophosphate anion to isochorismate to yield 2-succinyl-5-enolpyruvyl-6-hydroxy-3-cyclohexene-1-carboxylate (SEPHCHC). The sequence is that of 2-succinyl-5-enolpyruvyl-6-hydroxy-3-cyclohexene-1-carboxylate synthase from Mycobacterium leprae (strain Br4923).